The sequence spans 515 residues: Vacuolar segregation protein PEP7 (515 aa).

Residues 6 to 29 (VSCPICLRKFDNLQALNAHLDVEH) form a C2H2-type zinc finger. The disordered stretch occupies residues 36–58 (DSLGSNDSRLVNGKQKKARSVDS). The FYVE-type 1; atypical zinc finger occupies 72 to 137 (KKGKSCCHTC…CCHDCFVTKP (66 aa)). Zn(2+) contacts are provided by C78, C81, C94, C97, C102, H105, C129, C132, C221, C224, C237, C240, C245, C252, C289, and C292. The FYVE-type 2 zinc-finger motif lies at 215–297 (DRSVLFCNIC…LCSHCIDMLF (83 aa)).

In terms of assembly, interacts with VPS21, VPS45, PEP3 and PEP5.

The protein localises to the vacuole membrane. Required for vacuole segregation and vacuole protein sorting. Possibly part of a complex which tethers the vacuole membrane to microtubules, either directly or via kinesin or dynein-like motor proteins. Probably functions in several interorganelle traffic pathways. This Saccharomyces cerevisiae (strain ATCC 204508 / S288c) (Baker's yeast) protein is Vacuolar segregation protein PEP7 (PEP7).